We begin with the raw amino-acid sequence, 1368 residues long: DNA-directed RNA polymerase subunit beta (1368 aa).

Belongs to the RNA polymerase beta chain family. As to quaternary structure, the RNAP catalytic core consists of 2 alpha, 1 beta, 1 beta' and 1 omega subunit. When a sigma factor is associated with the core the holoenzyme is formed, which can initiate transcription.

The enzyme catalyses RNA(n) + a ribonucleoside 5'-triphosphate = RNA(n+1) + diphosphate. In terms of biological role, DNA-dependent RNA polymerase catalyzes the transcription of DNA into RNA using the four ribonucleoside triphosphates as substrates. This Burkholderia ambifaria (strain MC40-6) protein is DNA-directed RNA polymerase subunit beta.